The chain runs to 251 residues: Ubiquinone/menaquinone biosynthesis C-methyltransferase UbiE (251 aa).

S-adenosyl-L-methionine is bound by residues T74, D95, 123–124, and S140; that span reads NA.

It belongs to the class I-like SAM-binding methyltransferase superfamily. MenG/UbiE family.

The catalysed reaction is a 2-demethylmenaquinol + S-adenosyl-L-methionine = a menaquinol + S-adenosyl-L-homocysteine + H(+). It carries out the reaction a 2-methoxy-6-(all-trans-polyprenyl)benzene-1,4-diol + S-adenosyl-L-methionine = a 5-methoxy-2-methyl-3-(all-trans-polyprenyl)benzene-1,4-diol + S-adenosyl-L-homocysteine + H(+). It functions in the pathway quinol/quinone metabolism; menaquinone biosynthesis; menaquinol from 1,4-dihydroxy-2-naphthoate: step 2/2. Its pathway is cofactor biosynthesis; ubiquinone biosynthesis. Methyltransferase required for the conversion of demethylmenaquinol (DMKH2) to menaquinol (MKH2) and the conversion of 2-polyprenyl-6-methoxy-1,4-benzoquinol (DDMQH2) to 2-polyprenyl-3-methyl-6-methoxy-1,4-benzoquinol (DMQH2). This is Ubiquinone/menaquinone biosynthesis C-methyltransferase UbiE from Salmonella paratyphi A (strain AKU_12601).